The sequence spans 454 residues: Putative tyrosine kinase 36 (454 aa).

Residues 80–88 (LGSGSFGKV) and Lys98 each bind ATP. Asp192 serves as the catalytic Proton acceptor.

This sequence belongs to the protein kinase superfamily. Tyr protein kinase family.

The catalysed reaction is L-tyrosyl-[protein] + ATP = O-phospho-L-tyrosyl-[protein] + ADP + H(+). This Alcelaphine herpesvirus 1 (strain C500) (AlHV-1) protein is Putative tyrosine kinase 36 (36).